The chain runs to 349 residues: S-adenosylmethionine:tRNA ribosyltransferase-isomerase (349 aa).

This sequence belongs to the QueA family. As to quaternary structure, monomer.

It is found in the cytoplasm. The catalysed reaction is 7-aminomethyl-7-carbaguanosine(34) in tRNA + S-adenosyl-L-methionine = epoxyqueuosine(34) in tRNA + adenine + L-methionine + 2 H(+). Its pathway is tRNA modification; tRNA-queuosine biosynthesis. Functionally, transfers and isomerizes the ribose moiety from AdoMet to the 7-aminomethyl group of 7-deazaguanine (preQ1-tRNA) to give epoxyqueuosine (oQ-tRNA). The chain is S-adenosylmethionine:tRNA ribosyltransferase-isomerase from Pseudomonas putida (strain W619).